The following is a 326-amino-acid chain: Aspartate carbamoyltransferase catalytic subunit (326 aa).

Residues arginine 76 and threonine 77 each coordinate carbamoyl phosphate. Lysine 104 contributes to the L-aspartate binding site. The carbamoyl phosphate site is built by arginine 126, histidine 156, and glutamine 159. L-aspartate-binding residues include arginine 189 and arginine 244. 2 residues coordinate carbamoyl phosphate: glycine 285 and proline 286.

It belongs to the aspartate/ornithine carbamoyltransferase superfamily. ATCase family. As to quaternary structure, heterododecamer (2C3:3R2) of six catalytic PyrB chains organized as two trimers (C3), and six regulatory PyrI chains organized as three dimers (R2).

The catalysed reaction is carbamoyl phosphate + L-aspartate = N-carbamoyl-L-aspartate + phosphate + H(+). It functions in the pathway pyrimidine metabolism; UMP biosynthesis via de novo pathway; (S)-dihydroorotate from bicarbonate: step 2/3. Functionally, catalyzes the condensation of carbamoyl phosphate and aspartate to form carbamoyl aspartate and inorganic phosphate, the committed step in the de novo pyrimidine nucleotide biosynthesis pathway. In Polynucleobacter asymbioticus (strain DSM 18221 / CIP 109841 / QLW-P1DMWA-1) (Polynucleobacter necessarius subsp. asymbioticus), this protein is Aspartate carbamoyltransferase catalytic subunit.